The sequence spans 106 residues: Large ribosomal subunit protein bL21 (106 aa).

The protein belongs to the bacterial ribosomal protein bL21 family. As to quaternary structure, part of the 50S ribosomal subunit. Contacts protein L20.

In terms of biological role, this protein binds to 23S rRNA in the presence of protein L20. The chain is Large ribosomal subunit protein bL21 from Streptomyces griseus subsp. griseus (strain JCM 4626 / CBS 651.72 / NBRC 13350 / KCC S-0626 / ISP 5235).